The chain runs to 290 residues: tRNA pseudouridine synthase A (290 aa).

Asp-56 (nucleophile) is an active-site residue. Residue Tyr-109 coordinates substrate.

The protein belongs to the tRNA pseudouridine synthase TruA family.

The enzyme catalyses uridine(38/39/40) in tRNA = pseudouridine(38/39/40) in tRNA. Formation of pseudouridine at positions 38, 39 and 40 in the anticodon stem and loop of transfer RNAs. This Methanobrevibacter smithii (strain ATCC 35061 / DSM 861 / OCM 144 / PS) protein is tRNA pseudouridine synthase A.